The sequence spans 555 residues: Methionine--tRNA ligase (555 aa).

A 'HIGH' region motif is present at residues 13–23; it reads PYANGSLHIGH. Zn(2+) contacts are provided by cysteine 144, cysteine 147, cysteine 157, and cysteine 160. The 'KMSKS' region motif lies at 330–334; that stretch reads KISKS. Lysine 333 contributes to the ATP binding site.

The protein belongs to the class-I aminoacyl-tRNA synthetase family. MetG type 1 subfamily. Monomer. It depends on Zn(2+) as a cofactor.

Its subcellular location is the cytoplasm. The enzyme catalyses tRNA(Met) + L-methionine + ATP = L-methionyl-tRNA(Met) + AMP + diphosphate. Is required not only for elongation of protein synthesis but also for the initiation of all mRNA translation through initiator tRNA(fMet) aminoacylation. The protein is Methionine--tRNA ligase of Blochmanniella pennsylvanica (strain BPEN).